A 151-amino-acid polypeptide reads, in one-letter code: 4-hydroxybenzoyl-CoA thioesterase (151 aa).

Glu73 is a catalytic residue. 100 to 102 contacts substrate; sequence FFR.

This sequence belongs to the thioesterase PaaI family. As to quaternary structure, homotetramer.

It carries out the reaction 4-hydroxybenzoyl-CoA + H2O = 4-hydroxybenzoate + CoA + H(+). It functions in the pathway xenobiotic degradation; 4-chlorobenzoate degradation; 4-hydroxybenzoate from 4-chlorobenzoate: step 3/3. The sequence is that of 4-hydroxybenzoyl-CoA thioesterase from Arthrobacter globiformis.